Here is a 201-residue protein sequence, read N- to C-terminus: Large ribosomal subunit protein bL25 (201 aa).

The protein belongs to the bacterial ribosomal protein bL25 family. CTC subfamily. In terms of assembly, part of the 50S ribosomal subunit; part of the 5S rRNA/L5/L18/L25 subcomplex. Contacts the 5S rRNA. Binds to the 5S rRNA independently of L5 and L18.

Functionally, this is one of the proteins that binds to the 5S RNA in the ribosome where it forms part of the central protuberance. The polypeptide is Large ribosomal subunit protein bL25 (Aromatoleum aromaticum (strain DSM 19018 / LMG 30748 / EbN1) (Azoarcus sp. (strain EbN1))).